The chain runs to 166 residues: uncharacterized protein (166 aa).

Functionally, this protein may be involved in virus assembly. Essential for virus function. This is an uncharacterized protein from Sulfolobus spindle-shape virus 1 (SSV1).